A 1761-amino-acid polypeptide reads, in one-letter code: 6-methylsalicylic acid synthase AOL_s00215g283 (1761 aa).

The Ketosynthase family 3 (KS3) domain maps to 18 to 443 (QDDIAIIGMA…GTVAHAVIEQ (426 aa)). Residues Cys-190, His-325, and His-367 each act as for beta-ketoacyl synthase activity in the active site. The malonyl-CoA:ACP transacylase (MAT) domain stretch occupies residues 554–870 (VWVFSGHGAH…ALGKLHCHGA (317 aa)). Ser-641 functions as the For malonyltransferase activity in the catalytic mechanism. The interval 918–1038 (HVLLGAKHQV…GHVANNEWSK (121 aa)) is N-terminal hotdog fold. Positions 918–1187 (HVLLGAKHQV…NGMRFSAVEG (270 aa)) are dehydratase (DH) domain. Residues 918–1191 (HVLLGAKHQV…FSAVEGTPGA (274 aa)) form the PKS/mFAS DH domain. His-950 acts as the Proton acceptor; for dehydratase activity in catalysis. The C-terminal hotdog fold stretch occupies residues 1050-1191 (LPSVKPSFAT…FSAVEGTPGA (142 aa)). Asp-1113 functions as the Proton donor; for dehydratase activity in the catalytic mechanism. The tract at residues 1399 to 1587 (GTYLITGGLG…IVSFLWTSWN (189 aa)) is ketoreductase (KR) domain. The segment at 1654-1680 (PRKRAESSGTEAVSKGEVSEKAPVPKS) is disordered. One can recognise a Carrier domain in the interval 1686 to 1761 (EYLQNAISEC…HLVKWFEEKI (76 aa)). At Ser-1721 the chain carries O-(pantetheine 4'-phosphoryl)serine.

The enzyme catalyses 3 malonyl-CoA + acetyl-CoA + NADPH + 3 H(+) = 6-methylsalicylate + 3 CO2 + NADP(+) + 4 CoA + H2O. Its pathway is secondary metabolite biosynthesis; terpenoid biosynthesis. Its function is as follows. 6-methylsalicylic acid synthase; part of the gene cluster that mediates the biosynthesis of sesquiterpenyl epoxy-cyclohexenoids (SECs) such as anthrobotrisins and arthrosporols, metabolites that possess a novel hybrid carbon skeleton consisting of a polyketide-derived epoxycyclohexenol combined with a terpenoid-derived monocyclic sesquiterpenol substructure (PKS-PTS hybrid). The SEC pathway plays an important role for fungal soil colonization via decreasing fungal nematode-capturing ability. Within the pathway, the polyketide synthase (PKS) AOL_s00215g283 catalyzes the biosynthesis of 6-methylsalicylic acid (6-MSA) via condensation of 1 acetate and 3 malonate units. AOL_s00215g283 performs a series of programmed reactions including Claisen condensation, dehydration, reduction, and cyclization to yield 6-MSA. The pathway begins with the biosynthesis of 6-methylsalicylic acid (6-MSA), the first precursor of the polyketide-derived epoxycyclohexenol in arthrosporols, by the polyketide synthase (PKS) AOL_s00215g283. The 6-methylsalicylic acid decarboxylase AOL_s00215g281 then catalyzes the decarboxylation of 6-methylsalicylic acid to yield m-cresol. The cytochrome P450 monooxygenase AOL_s00215g282 further oxidizes m-cresol to yield toluquinol. With the assistance of the oxidoreductase AOL_s00215g277, the polyprenyl transferase AOL_s00215g276 catalyzes the farnesylation of toluquinol to produce farnesyl hydroquinone, the hybrid precursor for biosynthesis of SECs. Farnesyl hydroquinone undergoes epoxidation and then subsequent dehydrogenation to form farnesyl epoxy-quinone, the first and simplest SEC. The cytochrome P450 monooxygenase AOL_s00215g278 and the FAD-dependent monooxygenase AOL_s00215g279 might be involved in the oxygenation of the phenol moiety, most likely in the epoxy formation. The cytochrome P450 monooxygenases AOL_s00215g274 and AOL_s00215g280 are involved in specific regional ketone reductions at respectively C-4 and C-1 of farnesyl epoxy-quinone PubMed:33823587. This is 6-methylsalicylic acid synthase AOL_s00215g283 from Arthrobotrys oligospora (strain ATCC 24927 / CBS 115.81 / DSM 1491) (Nematode-trapping fungus).